The chain runs to 568 residues: T-complex protein 1 subunit theta (568 aa).

A Glycyl lysine isopeptide (Lys-Gly) (interchain with G-Cter in ubiquitin) cross-link involves residue Lys-15. Residue Ser-505 is modified to Phosphoserine.

It belongs to the TCP-1 chaperonin family. Heterooligomeric complex of about 850 to 900 kDa that forms two stacked rings, 12 to 16 nm in diameter.

It is found in the cytoplasm. In terms of biological role, molecular chaperone; assists the folding of proteins upon ATP hydrolysis. Known to play a role, in vitro, in the folding of actin and tubulin. In yeast may play a role in mitotic spindle formation. In Saccharomyces cerevisiae (strain ATCC 204508 / S288c) (Baker's yeast), this protein is T-complex protein 1 subunit theta (CCT8).